A 1341-amino-acid chain; its full sequence is uncharacterized protein (1341 aa).

The zn(2)-C6 fungal-type DNA-binding region spans 41 to 68 (CLLCRRRKQRCDHKLPSCTACLKAGIKC). Composition is skewed to low complexity over residues 72 to 93 (SKYSSSTSNSNTNNNTPTAGTV), 779 to 791 (SNSANAANLSNSN), 864 to 906 (SNSS…NDNN), 920 to 967 (NHNN…GNNS), and 1036 to 1050 (SPSKSSSISTASSHS). Disordered stretches follow at residues 72 to 100 (SKYSSSTSNSNTNNNTPTAGTVPPTPHPV), 770 to 804 (ISSGDTLHDSNSANAANLSNSNDKNISHNGGMPPA), 864 to 971 (SNSS…QYVR), and 1031 to 1116 (TMTN…NSNP). The segment covering 1057 to 1076 (MTQSPTPYPQTSNMLPQQHV) has biased composition (polar residues). Over residues 1078-1090 (RPLPQQQREQPQQ) the composition is skewed to low complexity. Residues 1091 to 1116 (HITSPQRFSESNFTNQLNNGMINSNP) are compositionally biased toward polar residues. Ser-1143 is subject to Phosphoserine. Residues 1220 to 1230 (SQEPSSLSMDK) show a composition bias toward polar residues. The segment at 1220–1240 (SQEPSSLSMDKQQQQHQQQNM) is disordered.

The protein resides in the nucleus. This is an uncharacterized protein from Saccharomyces cerevisiae (strain ATCC 204508 / S288c) (Baker's yeast).